Here is a 108-residue protein sequence, read N- to C-terminus: ATP-dependent Clp protease adapter protein ClpS (108 aa).

Belongs to the ClpS family. Binds to the N-terminal domain of the chaperone ClpA.

In terms of biological role, involved in the modulation of the specificity of the ClpAP-mediated ATP-dependent protein degradation. The chain is ATP-dependent Clp protease adapter protein ClpS from Ralstonia nicotianae (strain ATCC BAA-1114 / GMI1000) (Ralstonia solanacearum).